Consider the following 288-residue polypeptide: Protease HtpX (288 aa).

2 consecutive transmembrane segments (helical) span residues 4 to 24 and 33 to 53; these read ILLF…ILTL and VGLL…SLLM. His139 serves as a coordination point for Zn(2+). Glu140 is an active-site residue. His143 provides a ligand contact to Zn(2+). Transmembrane regions (helical) follow at residues 146–166 and 186–206; these read SGDM…VIFI and IYFM…SMIA. Glu214 is a binding site for Zn(2+).

It belongs to the peptidase M48B family. Requires Zn(2+) as cofactor.

It localises to the cell inner membrane. This is Protease HtpX from Histophilus somni (strain 2336) (Haemophilus somnus).